Reading from the N-terminus, the 1412-residue chain is DNA-directed RNA polymerase subunit beta' (1412 aa).

Residues Cys-70, Cys-72, Cys-85, and Cys-88 each coordinate Zn(2+). Positions 460, 462, and 464 each coordinate Mg(2+). 4 residues coordinate Zn(2+): Cys-819, Cys-893, Cys-900, and Cys-903. The interval 1392–1412 (EEAFEFGTPSAPAEEPQHPAE) is disordered.

The protein belongs to the RNA polymerase beta' chain family. The RNAP catalytic core consists of 2 alpha, 1 beta, 1 beta' and 1 omega subunit. When a sigma factor is associated with the core the holoenzyme is formed, which can initiate transcription. Requires Mg(2+) as cofactor. It depends on Zn(2+) as a cofactor.

The enzyme catalyses RNA(n) + a ribonucleoside 5'-triphosphate = RNA(n+1) + diphosphate. Functionally, DNA-dependent RNA polymerase catalyzes the transcription of DNA into RNA using the four ribonucleoside triphosphates as substrates. This is DNA-directed RNA polymerase subunit beta' from Burkholderia mallei (strain NCTC 10247).